Consider the following 338-residue polypeptide: RNA 3'-terminal phosphate cyclase (338 aa).

ATP-binding positions include Gln-103 and 283 to 287; that span reads YLADQ. His-308 functions as the Tele-AMP-histidine intermediate in the catalytic mechanism.

It belongs to the RNA 3'-terminal cyclase family. Type 1 subfamily.

The protein resides in the cytoplasm. The catalysed reaction is a 3'-end 3'-phospho-ribonucleotide-RNA + ATP = a 3'-end 2',3'-cyclophospho-ribonucleotide-RNA + AMP + diphosphate. In terms of biological role, catalyzes the conversion of 3'-phosphate to a 2',3'-cyclic phosphodiester at the end of RNA. The mechanism of action of the enzyme occurs in 3 steps: (A) adenylation of the enzyme by ATP; (B) transfer of adenylate to an RNA-N3'P to produce RNA-N3'PP5'A; (C) and attack of the adjacent 2'-hydroxyl on the 3'-phosphorus in the diester linkage to produce the cyclic end product. The biological role of this enzyme is unknown but it is likely to function in some aspects of cellular RNA processing. The sequence is that of RNA 3'-terminal phosphate cyclase from Escherichia coli O81 (strain ED1a).